The chain runs to 487 residues: 3-octaprenyl-4-hydroxybenzoate carboxy-lyase (487 aa).

Asn172 serves as a coordination point for Mn(2+). Residues Ile175 to Arg177, Arg189 to Leu191, and Arg194 to Gly195 contribute to the prenylated FMN site. Glu238 contributes to the Mn(2+) binding site. The Proton donor role is filled by Asp287.

This sequence belongs to the UbiD family. As to quaternary structure, homohexamer. It depends on prenylated FMN as a cofactor. Mn(2+) serves as cofactor.

It is found in the cell membrane. It carries out the reaction a 4-hydroxy-3-(all-trans-polyprenyl)benzoate + H(+) = a 2-(all-trans-polyprenyl)phenol + CO2. It functions in the pathway cofactor biosynthesis; ubiquinone biosynthesis. Its function is as follows. Catalyzes the decarboxylation of 3-octaprenyl-4-hydroxy benzoate to 2-octaprenylphenol, an intermediate step in ubiquinone biosynthesis. In Nitrosospira multiformis (strain ATCC 25196 / NCIMB 11849 / C 71), this protein is 3-octaprenyl-4-hydroxybenzoate carboxy-lyase.